The sequence spans 40 residues: uncharacterized protein (40 aa).

This is an uncharacterized protein from Treponema pallidum (strain Nichols).